A 330-amino-acid polypeptide reads, in one-letter code: MGSRKKEIALQVNISTQELWEEMLSSKGLTVVDVYQGWCGPCKPVVSLFQKMRIEVGLDLLHFALAEADRLDVLEKYRGKCEPTFLFYAGGELVAVVRGANAPLLQKTILDQLEAEKKVLAEGRERKVIKDEALSDEDECVSHGKNNGEDEDMVSSERTCTLAIIKPDAVAHGKTDEIIMKIQEAGFEILTNEERTMTEAEVRLFYQHKAGEEAFEKLVHHMCSGPSHLLILTRTEGFEDVVTTWRTVMGPRDPNVARREQPESLRAQYGTEMPFNAVHGSRDREDADRELALLFPSLKFSDKDTEAPQGGEAEATAGPTEALCFPEDVD.

One can recognise a Thioredoxin domain in the interval 11-115 (QVNISTQELW…QKTILDQLEA (105 aa)). Residues 157-303 (ERTCTLAIIK…LFPSLKFSDK (147 aa)) are NDK. Residues 300–330 (FSDKDTEAPQGGEAEATAGPTEALCFPEDVD) form a disordered region. Over residues 307–322 (APQGGEAEATAGPTEA) the composition is skewed to low complexity.

The protein belongs to the NDK family. As to quaternary structure, monomer and homodimer. In terms of tissue distribution, detected at very low levels in testis, lung and brain.

The protein resides in the cytoplasm. Its subcellular location is the cytoskeleton. It localises to the cilium axoneme. The protein localises to the dynein axonemal particle. Functionally, may be a regulator of microtubule physiology. In Homo sapiens (Human), this protein is Thioredoxin domain-containing protein 6.